Reading from the N-terminus, the 382-residue chain is Histidinol-phosphate aminotransferase (382 aa).

Residues 1 to 28 (MTSAPRPRPTLDDLPLREDLRGKSPYGA) are disordered. Positions 9-22 (PTLDDLPLREDLRG) are enriched in basic and acidic residues. Residue K233 is modified to N6-(pyridoxal phosphate)lysine.

Belongs to the class-II pyridoxal-phosphate-dependent aminotransferase family. Histidinol-phosphate aminotransferase subfamily. In terms of assembly, homodimer. Pyridoxal 5'-phosphate serves as cofactor.

It carries out the reaction L-histidinol phosphate + 2-oxoglutarate = 3-(imidazol-4-yl)-2-oxopropyl phosphate + L-glutamate. Its pathway is amino-acid biosynthesis; L-histidine biosynthesis; L-histidine from 5-phospho-alpha-D-ribose 1-diphosphate: step 7/9. This chain is Histidinol-phosphate aminotransferase, found in Mycobacterium marinum (strain ATCC BAA-535 / M).